The following is a 480-amino-acid chain: Aspartyl/glutamyl-tRNA(Asn/Gln) amidotransferase subunit B (480 aa).

This sequence belongs to the GatB/GatE family. GatB subfamily. Heterotrimer of A, B and C subunits.

It catalyses the reaction L-glutamyl-tRNA(Gln) + L-glutamine + ATP + H2O = L-glutaminyl-tRNA(Gln) + L-glutamate + ADP + phosphate + H(+). The catalysed reaction is L-aspartyl-tRNA(Asn) + L-glutamine + ATP + H2O = L-asparaginyl-tRNA(Asn) + L-glutamate + ADP + phosphate + 2 H(+). Its function is as follows. Allows the formation of correctly charged Asn-tRNA(Asn) or Gln-tRNA(Gln) through the transamidation of misacylated Asp-tRNA(Asn) or Glu-tRNA(Gln) in organisms which lack either or both of asparaginyl-tRNA or glutaminyl-tRNA synthetases. The reaction takes place in the presence of glutamine and ATP through an activated phospho-Asp-tRNA(Asn) or phospho-Glu-tRNA(Gln). The chain is Aspartyl/glutamyl-tRNA(Asn/Gln) amidotransferase subunit B from Streptococcus pneumoniae (strain P1031).